A 195-amino-acid polypeptide reads, in one-letter code: Protein Fer3 (195 aa).

Disordered regions lie at residues 1–24 (MQHP…LWGQ) and 56–82 (PLVP…RRRV). Positions 63–75 (STNGRANGSSSSS) are enriched in low complexity. Residues 86-138 (AQRRAANIRERRRMFNLNEAFDKLRRKVPTFAYEKRLSRIETLRLAITYIGFM) form the bHLH domain. Positions 145-175 (TPSNSHKSRSDVYGSMNGHHQAPPPAIHPHH) are disordered.

Its subcellular location is the nucleus. Transcription factor that binds to the E-box and functions as inhibitor of transcription. DNA binding requires dimerization with an E protein. Inhibits transcription activation by ASCL1/MASH1 by sequestering E proteins. This Drosophila melanogaster (Fruit fly) protein is Protein Fer3 (fer3).